A 129-amino-acid polypeptide reads, in one-letter code: 3-aminoacrylate deaminase RutC (129 aa).

It belongs to the RutC family.

The catalysed reaction is (Z)-3-aminoacrylate + H2O + H(+) = 3-oxopropanoate + NH4(+). Its function is as follows. Involved in pyrimidine catabolism. Catalyzes the deamination of 3-aminoacrylate to malonic semialdehyde, a reaction that can also occur spontaneously. RutC may facilitate the reaction and modulate the metabolic fitness, rather than catalyzing essential functions. The sequence is that of 3-aminoacrylate deaminase RutC from Caulobacter sp. (strain K31).